The chain runs to 285 residues: DegV domain-containing protein CA_C3284 (285 aa).

The 278-residue stretch at 3–280 (VKILTDSTSC…PGAIGIAYYT (278 aa)) folds into the DegV domain. Hexadecanoate contacts are provided by serine 59 and serine 91.

In terms of biological role, may bind long-chain fatty acids, such as palmitate, and may play a role in lipid transport or fatty acid metabolism. This chain is DegV domain-containing protein CA_C3284, found in Clostridium acetobutylicum (strain ATCC 824 / DSM 792 / JCM 1419 / IAM 19013 / LMG 5710 / NBRC 13948 / NRRL B-527 / VKM B-1787 / 2291 / W).